Here is a 242-residue protein sequence, read N- to C-terminus: Phosphoribosyl isomerase A (242 aa).

Residue Asp-12 is the Proton acceptor of the active site. Residue Asp-131 is the Proton donor of the active site.

This sequence belongs to the HisA/HisF family.

Its subcellular location is the cytoplasm. The enzyme catalyses 1-(5-phospho-beta-D-ribosyl)-5-[(5-phospho-beta-D-ribosylamino)methylideneamino]imidazole-4-carboxamide = 5-[(5-phospho-1-deoxy-D-ribulos-1-ylimino)methylamino]-1-(5-phospho-beta-D-ribosyl)imidazole-4-carboxamide. The catalysed reaction is N-(5-phospho-beta-D-ribosyl)anthranilate = 1-(2-carboxyphenylamino)-1-deoxy-D-ribulose 5-phosphate. The protein operates within amino-acid biosynthesis; L-histidine biosynthesis; L-histidine from 5-phospho-alpha-D-ribose 1-diphosphate: step 4/9. It participates in amino-acid biosynthesis; L-tryptophan biosynthesis; L-tryptophan from chorismate: step 3/5. In terms of biological role, involved in both the histidine and tryptophan biosynthetic pathways. The chain is Phosphoribosyl isomerase A from Streptomyces avermitilis (strain ATCC 31267 / DSM 46492 / JCM 5070 / NBRC 14893 / NCIMB 12804 / NRRL 8165 / MA-4680).